A 207-amino-acid polypeptide reads, in one-letter code: MYNNALHGIYLTQITWMKSARAEPYLYYIVTEVEKRNLPIELALMPLIESDFNASAYSHKHASGLWQLTPAIAKYFKVQISPWYDGRQDVIDSTRAALNFMEYLHKRFDGDWYHAIAALNLGEGRVLRAISNIKNKANPLIFQLKTAQTNQSVRAKRTSCGTIIKKPKNAFPAILNSPTIAVLPVDCAVILDNRKQWQQLEIFKPMV.

The segment at 37–122 (NLPIELALMP…YHAIAALNLG (86 aa)) is slt-type domain. E49 is an active-site residue.

It belongs to the transglycosylase Slt family.

The sequence is that of Putative tributyltin chloride resistance protein (tbtA) from Alteromonas sp. (strain M-1).